A 106-amino-acid polypeptide reads, in one-letter code: MTSATQFDNVSVVKRANVYFDGKCVSHTVLFPEGTRKTLGVILPCALNFGTDAPELMEVQAGKCRVKLDGSSEWQTYGAGESFSVPGKSRFDIEVLETLDYVCSYL.

This sequence belongs to the nucleoside phosphorylase PpnP family.

The enzyme catalyses a purine D-ribonucleoside + phosphate = a purine nucleobase + alpha-D-ribose 1-phosphate. It carries out the reaction adenosine + phosphate = alpha-D-ribose 1-phosphate + adenine. The catalysed reaction is cytidine + phosphate = cytosine + alpha-D-ribose 1-phosphate. It catalyses the reaction guanosine + phosphate = alpha-D-ribose 1-phosphate + guanine. The enzyme catalyses inosine + phosphate = alpha-D-ribose 1-phosphate + hypoxanthine. It carries out the reaction thymidine + phosphate = 2-deoxy-alpha-D-ribose 1-phosphate + thymine. The catalysed reaction is uridine + phosphate = alpha-D-ribose 1-phosphate + uracil. It catalyses the reaction xanthosine + phosphate = alpha-D-ribose 1-phosphate + xanthine. In terms of biological role, catalyzes the phosphorolysis of diverse nucleosides, yielding D-ribose 1-phosphate and the respective free bases. Can use uridine, adenosine, guanosine, cytidine, thymidine, inosine and xanthosine as substrates. Also catalyzes the reverse reactions. The chain is Pyrimidine/purine nucleoside phosphorylase from Burkholderia ambifaria (strain ATCC BAA-244 / DSM 16087 / CCUG 44356 / LMG 19182 / AMMD) (Burkholderia cepacia (strain AMMD)).